We begin with the raw amino-acid sequence, 248 residues long: Large ribosomal subunit protein uL30 (248 aa).

Residues Lys-22–Asn-42 form a disordered region. The span at Gln-24–Asn-42 shows a compositional bias: basic and acidic residues.

The protein belongs to the universal ribosomal protein uL30 family. Component of the large ribosomal subunit (LSU). Mature N.crassa ribosomes consist of a small (40S) and a large (60S) subunit. The 40S small subunit contains 1 molecule of ribosomal RNA (18S rRNA) and at least 32 different proteins. The large 60S subunit contains 3 rRNA molecules (26S, 5.8S and 5S rRNA) and at least 42 different proteins.

Its subcellular location is the cytoplasm. Functionally, component of the ribosome, a large ribonucleoprotein complex responsible for the synthesis of proteins in the cell. The small ribosomal subunit (SSU) binds messenger RNAs (mRNAs) and translates the encoded message by selecting cognate aminoacyl-transfer RNA (tRNA) molecules. The large subunit (LSU) contains the ribosomal catalytic site termed the peptidyl transferase center (PTC), which catalyzes the formation of peptide bonds, thereby polymerizing the amino acids delivered by tRNAs into a polypeptide chain. The nascent polypeptides leave the ribosome through a tunnel in the LSU and interact with protein factors that function in enzymatic processing, targeting, and the membrane insertion of nascent chains at the exit of the ribosomal tunnel. This is Large ribosomal subunit protein uL30 (rpl-7) from Neurospora crassa (strain ATCC 24698 / 74-OR23-1A / CBS 708.71 / DSM 1257 / FGSC 987).